A 483-amino-acid polypeptide reads, in one-letter code: Prenyltransferase vrtC (483 aa).

Belongs to the tryptophan dimethylallyltransferase family.

It participates in secondary metabolite biosynthesis; terpenoid biosynthesis. In terms of biological role, prenyltransferase; part of the gene cluster that mediates the biosynthesis of viridicatumtoxin, a tetracycline-like fungal meroterpenoid with a unique, fused spirobicyclic ring system. The first step of the pathway is the production of the malonamoyl-CoA starter unit for the polyketide synthase vrtA. The aldolase vrtJ may be involved in the synthesis of the malonamate substrate for malonamoyl-CoA synthetase vrtB. The polyketide synthase vrtA then may utilize the malonamoyl-CoA starter unit, followed by sequential condensation of eight malonyl-CoA units to form the polyketide backbone. The cyclization of the last ring could be mediated by the lactamase-like protein vrtG. The proposed post-PKS tailoring steps are a hydroxylation at C5 catalyzed the cytochrome P450 monooxygenase vrtE, a hydroxylation at C12a catalyzed by VrtH and/or VrtI, and an O-methylation by the O-methyltransferase vrtF. VrtC is then proposed to catalyze the transfer of a geranyl group synthesized by vrtD to the aromatic C ring of the tetracyclic polyketide intermediate of viridicatumtoxin to yield previridicatumtoxin. Finally, the cytochrome P450 monooxygenase vrtK catalyzes the spirocyclization of the geranyl moiety of previridicatumtoxin to afford viridicatumtoxin. This Penicillium aethiopicum protein is Prenyltransferase vrtC.